Consider the following 550-residue polypeptide: MISDNVKKGVIRSPNRALLKACGYSDEDMEKPFIGVVNSFTEVVPGHIHLKTLSDAVKHGVYANGGTPFEFNTIGICDGIAMGHEGMKYSLPSREIIADAVESMARAHGFDGLVLIPTCDKIVPGMIMGALRLNIPFIVVTGGPMLPGEFQGKKCELISLFEGVGEYQVGKITEEELKSIEECACPGAGSCAGLYTANSMACLTEALGLSLPMCATIHAVDAQKVRIAKKTGSKIVDLVKEDVKPTDILTKEAFENAILVDLALGGSTNTTLHIPAIANEIENKFITLDDFDRLSDEVPHIASIKPGGEHYMIDLHNAGGIPAVLKVLKEKIRNTKTVDGRSTLEIAESVKYVNYDVIRKVEAPVHETAGLRVLKGNLAPNGCVVKIGAVDPKMHKHEGPAKVYNSEDEAIAAILGGKIVEGDVVVIRHEGPSGGPGMREMLSPTSAICGMGLDDSVALITDGRFSGGSRGPCIGHVSPEAAAGGLIAAIENGDIIKIDMIEKEINVDLDESVIKERLSKLEEFEPKIKKGYLSRYSRLVSSADEGAVLK.

Aspartate 78 contacts Mg(2+). Cysteine 119 provides a ligand contact to [2Fe-2S] cluster. Mg(2+) is bound by residues aspartate 120 and lysine 121. An N6-carboxylysine modification is found at lysine 121. Cysteine 191 contacts [2Fe-2S] cluster. Position 440 (glutamate 440) interacts with Mg(2+). Serine 466 acts as the Proton acceptor in catalysis.

This sequence belongs to the IlvD/Edd family. In terms of assembly, homodimer. The cofactor is [2Fe-2S] cluster. Mg(2+) serves as cofactor.

It carries out the reaction (2R)-2,3-dihydroxy-3-methylbutanoate = 3-methyl-2-oxobutanoate + H2O. The enzyme catalyses (2R,3R)-2,3-dihydroxy-3-methylpentanoate = (S)-3-methyl-2-oxopentanoate + H2O. It functions in the pathway amino-acid biosynthesis; L-isoleucine biosynthesis; L-isoleucine from 2-oxobutanoate: step 3/4. Its pathway is amino-acid biosynthesis; L-valine biosynthesis; L-valine from pyruvate: step 3/4. Its function is as follows. Functions in the biosynthesis of branched-chain amino acids. Catalyzes the dehydration of (2R,3R)-2,3-dihydroxy-3-methylpentanoate (2,3-dihydroxy-3-methylvalerate) into 2-oxo-3-methylpentanoate (2-oxo-3-methylvalerate) and of (2R)-2,3-dihydroxy-3-methylbutanoate (2,3-dihydroxyisovalerate) into 2-oxo-3-methylbutanoate (2-oxoisovalerate), the penultimate precursor to L-isoleucine and L-valine, respectively. This chain is Dihydroxy-acid dehydratase, found in Methanococcus maripaludis (strain C5 / ATCC BAA-1333).